The primary structure comprises 255 residues: Pyrroloquinoline-quinone synthase (255 aa).

This sequence belongs to the PqqC family.

The enzyme catalyses 6-(2-amino-2-carboxyethyl)-7,8-dioxo-1,2,3,4,7,8-hexahydroquinoline-2,4-dicarboxylate + 3 O2 = pyrroloquinoline quinone + 2 H2O2 + 2 H2O + H(+). Its pathway is cofactor biosynthesis; pyrroloquinoline quinone biosynthesis. Functionally, ring cyclization and eight-electron oxidation of 3a-(2-amino-2-carboxyethyl)-4,5-dioxo-4,5,6,7,8,9-hexahydroquinoline-7,9-dicarboxylic-acid to PQQ. This chain is Pyrroloquinoline-quinone synthase, found in Cereibacter sphaeroides (strain ATCC 17025 / ATH 2.4.3) (Rhodobacter sphaeroides).